A 213-amino-acid polypeptide reads, in one-letter code: Kynurenine formamidase (213 aa).

Trp-18 provides a ligand contact to substrate. Zn(2+) contacts are provided by His-48, His-52, and Asp-54. The active-site Proton donor/acceptor is the His-58. Zn(2+) contacts are provided by His-160 and Glu-172.

The protein belongs to the Cyclase 1 superfamily. KynB family. As to quaternary structure, homodimer. Requires Zn(2+) as cofactor.

It carries out the reaction N-formyl-L-kynurenine + H2O = L-kynurenine + formate + H(+). The protein operates within amino-acid degradation; L-tryptophan degradation via kynurenine pathway; L-kynurenine from L-tryptophan: step 2/2. In terms of biological role, catalyzes the hydrolysis of N-formyl-L-kynurenine to L-kynurenine, the second step in the kynurenine pathway of tryptophan degradation. In Burkholderia pseudomallei (strain 1710b), this protein is Kynurenine formamidase.